Reading from the N-terminus, the 273-residue chain is Large ribosomal subunit protein uL2cz/uL2cy (273 aa).

Disordered stretches follow at residues 1–20 (MAIH…AVDS) and 224–254 (NPVD…PALG).

This sequence belongs to the universal ribosomal protein uL2 family. As to quaternary structure, part of the 50S ribosomal subunit.

The protein localises to the plastid. Its subcellular location is the chloroplast. This Nuphar advena (Common spatterdock) protein is Large ribosomal subunit protein uL2cz/uL2cy (rpl2-A).